The following is a 267-amino-acid chain: Thymidylate synthase (267 aa).

Arg-24 is a binding site for dUMP. A (6R)-5,10-methylene-5,6,7,8-tetrahydrofolate-binding site is contributed by His-54. Position 129–130 (129–130 (RR)) interacts with dUMP. Cys-149 serves as the catalytic Nucleophile. Residues 169–172 (RSAD), Asn-180, and 210–212 (HIY) each bind dUMP. Asp-172 contacts (6R)-5,10-methylene-5,6,7,8-tetrahydrofolate. A (6R)-5,10-methylene-5,6,7,8-tetrahydrofolate-binding site is contributed by Ala-266.

This sequence belongs to the thymidylate synthase family. Bacterial-type ThyA subfamily. As to quaternary structure, homodimer.

The protein resides in the cytoplasm. The enzyme catalyses dUMP + (6R)-5,10-methylene-5,6,7,8-tetrahydrofolate = 7,8-dihydrofolate + dTMP. Its pathway is pyrimidine metabolism; dTTP biosynthesis. In terms of biological role, catalyzes the reductive methylation of 2'-deoxyuridine-5'-monophosphate (dUMP) to 2'-deoxythymidine-5'-monophosphate (dTMP) while utilizing 5,10-methylenetetrahydrofolate (mTHF) as the methyl donor and reductant in the reaction, yielding dihydrofolate (DHF) as a by-product. This enzymatic reaction provides an intracellular de novo source of dTMP, an essential precursor for DNA biosynthesis. The polypeptide is Thymidylate synthase (Arthrobacter sp. (strain FB24)).